The primary structure comprises 551 residues: Dihydroxy-acid dehydratase (551 aa).

Asp-78 contributes to the Mg(2+) binding site. Cys-119 is a [2Fe-2S] cluster binding site. 2 residues coordinate Mg(2+): Asp-120 and Lys-121. Lys-121 is subject to N6-carboxylysine. Cys-191 lines the [2Fe-2S] cluster pocket. A Mg(2+)-binding site is contributed by Glu-442. Ser-468 serves as the catalytic Proton acceptor.

This sequence belongs to the IlvD/Edd family. In terms of assembly, homodimer. The cofactor is [2Fe-2S] cluster. Mg(2+) serves as cofactor.

It catalyses the reaction (2R)-2,3-dihydroxy-3-methylbutanoate = 3-methyl-2-oxobutanoate + H2O. It carries out the reaction (2R,3R)-2,3-dihydroxy-3-methylpentanoate = (S)-3-methyl-2-oxopentanoate + H2O. It participates in amino-acid biosynthesis; L-isoleucine biosynthesis; L-isoleucine from 2-oxobutanoate: step 3/4. Its pathway is amino-acid biosynthesis; L-valine biosynthesis; L-valine from pyruvate: step 3/4. Functionally, functions in the biosynthesis of branched-chain amino acids. Catalyzes the dehydration of (2R,3R)-2,3-dihydroxy-3-methylpentanoate (2,3-dihydroxy-3-methylvalerate) into 2-oxo-3-methylpentanoate (2-oxo-3-methylvalerate) and of (2R)-2,3-dihydroxy-3-methylbutanoate (2,3-dihydroxyisovalerate) into 2-oxo-3-methylbutanoate (2-oxoisovalerate), the penultimate precursor to L-isoleucine and L-valine, respectively. The protein is Dihydroxy-acid dehydratase of Halothermothrix orenii (strain H 168 / OCM 544 / DSM 9562).